The chain runs to 47 residues: MTTKNRQIQNFTLNFGPQHPAAHGVLRLVLEMNGEVVERAEPHIGLL.

The protein belongs to the complex I 49 kDa subunit family. Complex I is composed of about 45 different subunits. This is a component of the iron-sulfur (IP) fragment of the enzyme.

It localises to the mitochondrion inner membrane. It catalyses the reaction a ubiquinone + NADH + 5 H(+)(in) = a ubiquinol + NAD(+) + 4 H(+)(out). In terms of biological role, core subunit of the mitochondrial membrane respiratory chain NADH dehydrogenase (Complex I) that is believed to belong to the minimal assembly required for catalysis. Complex I functions in the transfer of electrons from NADH to the respiratory chain. The immediate electron acceptor for the enzyme is believed to be ubiquinone. Component of the iron-sulfur (IP) fragment of the enzyme. The protein is NADH dehydrogenase [ubiquinone] iron-sulfur protein 2 (NAD7) of Solanum tuberosum (Potato).